Here is a 449-residue protein sequence, read N- to C-terminus: 5'-deoxyadenosine deaminase (449 aa).

Zn(2+) contacts are provided by His79 and His81. 2 residues coordinate substrate: Glu108 and His200. His227 is a binding site for Zn(2+). Glu230 and Asp316 together coordinate substrate. Asp316 contributes to the Zn(2+) binding site.

It belongs to the metallo-dependent hydrolases superfamily. MTA/SAH deaminase family. In terms of assembly, homotetramer. The cofactor is Zn(2+).

It catalyses the reaction 5'-deoxyadenosine + H2O + H(+) = 5'-deoxyinosine + NH4(+). The enzyme catalyses S-adenosyl-L-homocysteine + H2O + H(+) = S-inosyl-L-homocysteine + NH4(+). The catalysed reaction is S-methyl-5'-thioadenosine + H2O + H(+) = S-methyl-5'-thioinosine + NH4(+). It carries out the reaction adenosine + H2O + H(+) = inosine + NH4(+). The protein operates within amino-acid biosynthesis; S-adenosyl-L-methionine biosynthesis. In terms of biological role, catalyzes the deamination of three SAM-derived enzymatic products, namely 5'-deoxyadenosine, S-adenosyl-L-homocysteine, and 5'-methylthioadenosine, to produce the inosine analogs. Can also deaminate adenosine. The preferred substrate for this enzyme is 5'-deoxyadenosine, but all these substrates are efficiently deaminated. Likely functions in a S-adenosyl-L-methionine (SAM) recycling pathway from S-adenosyl-L-homocysteine (SAH) produced from SAM-dependent methylation reactions. May also be involved in the recycling of 5'-deoxyadenosine, whereupon the 5'-deoxyribose moiety of 5'-deoxyinosine is further metabolized to deoxyhexoses used for the biosynthesis of aromatic amino acids in methanogens. The sequence is that of 5'-deoxyadenosine deaminase from Methanospirillum hungatei JF-1 (strain ATCC 27890 / DSM 864 / NBRC 100397 / JF-1).